Here is a 1873-residue protein sequence, read N- to C-terminus: Kinesin-related protein 8 (1873 aa).

The Kinesin motor domain maps to 13 to 413; that stretch reads CVRVALRVRP…LKYAYRARNI (401 aa). 93–100 provides a ligand contact to ATP; that stretch reads GQTGSGKT. 9 disordered regions span residues 231 to 302, 463 to 567, 778 to 797, 841 to 891, 930 to 1008, 1179 to 1207, 1244 to 1267, 1328 to 1360, and 1403 to 1467; these read NSPV…DERN, VSIP…SPTS, LDKD…YYED, KIDS…ARKT, KQRV…TEQL, PQPL…QRSS, LPSQ…STSS, TTTT…NNSS, and NNIT…PRPD. The segment covering 232 to 247 has biased composition (low complexity); sequence SPVTSSSTSSTSTSSS. The segment covering 280–297 has biased composition (acidic residues); the sequence is IDEDEEDDEEDEDDDIMS. Over residues 473–567 the composition is skewed to low complexity; the sequence is TPTLTNNNNN…NNTATPSPTS (95 aa). Residues 715–933 are a coiled coil; sequence FENDSEELSD…KEIEVHKQRV (219 aa). 5 stretches are compositionally biased toward low complexity: residues 937–1005, 1182–1200, 1244–1254, 1348–1358, and 1423–1454; these read INSK…TPTT, LQSQ…NSEQ, LPSQQQLSSSQ, NNTNNNNNNNN, and SLQS…SNNN. 5 WD repeats span residues 1506 to 1546, 1548 to 1587, 1589 to 1628, 1636 to 1673, and 1677 to 1714; these read GHDG…NMLD, SSPG…NTNL, IFKT…KPLK, HHTG…LAQK, and PHHD…NLIN. Positions 1758–1780 are disordered; it reads NNNNNNSSNNNKSSSAPSSTTSS. 2 WD repeats span residues 1805-1842 and 1844-1873; these read AHND…NSLL and GHES…IWKC.

The protein belongs to the TRAFAC class myosin-kinesin ATPase superfamily. Kinesin family.

It is found in the cytoplasm. The protein localises to the cytoskeleton. In terms of biological role, microtubule-associated force-producing protein that plays a role in organelle transport. Its motor activity is directed toward the microtubule's plus end. Cooperates with kif10 and dynein to organize interphase microtubules. This is Kinesin-related protein 8 (kif8) from Dictyostelium discoideum (Social amoeba).